Here is a 667-residue protein sequence, read N- to C-terminus: Threonine--tRNA ligase (667 aa).

The 62-residue stretch at 3–64 (DMIRVTLPDG…EEDTNLALVT (62 aa)) folds into the TGS domain. Residues 252–561 (DHRRLGQEMD…LIEHFVGRFP (310 aa)) form a catalytic region. Zn(2+) is bound by residues Cys357, His408, and His538.

This sequence belongs to the class-II aminoacyl-tRNA synthetase family. In terms of assembly, homodimer. The cofactor is Zn(2+).

Its subcellular location is the cytoplasm. It carries out the reaction tRNA(Thr) + L-threonine + ATP = L-threonyl-tRNA(Thr) + AMP + diphosphate + H(+). In terms of biological role, catalyzes the attachment of threonine to tRNA(Thr) in a two-step reaction: L-threonine is first activated by ATP to form Thr-AMP and then transferred to the acceptor end of tRNA(Thr). Also edits incorrectly charged L-seryl-tRNA(Thr). The protein is Threonine--tRNA ligase of Sphingopyxis alaskensis (strain DSM 13593 / LMG 18877 / RB2256) (Sphingomonas alaskensis).